We begin with the raw amino-acid sequence, 297 residues long: Bifunctional protein FolD (297 aa).

NADP(+)-binding positions include 167–169 and I233; that span reads GRS.

The protein belongs to the tetrahydrofolate dehydrogenase/cyclohydrolase family. Homodimer.

The catalysed reaction is (6R)-5,10-methylene-5,6,7,8-tetrahydrofolate + NADP(+) = (6R)-5,10-methenyltetrahydrofolate + NADPH. It carries out the reaction (6R)-5,10-methenyltetrahydrofolate + H2O = (6R)-10-formyltetrahydrofolate + H(+). The protein operates within one-carbon metabolism; tetrahydrofolate interconversion. In terms of biological role, catalyzes the oxidation of 5,10-methylenetetrahydrofolate to 5,10-methenyltetrahydrofolate and then the hydrolysis of 5,10-methenyltetrahydrofolate to 10-formyltetrahydrofolate. The polypeptide is Bifunctional protein FolD (Zymomonas mobilis subsp. mobilis (strain ATCC 31821 / ZM4 / CP4)).